Consider the following 172-residue polypeptide: uncharacterized protein (172 aa).

Transmembrane regions (helical) follow at residues 7–27 (ILISYVGLIKLALAGILCYGI), 59–79 (LMIFLAFGFPIFFIGSFLYLF), and 89–109 (FSLTFAITFFVLFIFGLLFVK).

This sequence to M.jannaschii MJ0695.

Its subcellular location is the cell membrane. This is an uncharacterized protein from Methanocaldococcus jannaschii (strain ATCC 43067 / DSM 2661 / JAL-1 / JCM 10045 / NBRC 100440) (Methanococcus jannaschii).